The sequence spans 371 residues: Putative glutamate--cysteine ligase 2 (371 aa).

The protein belongs to the glutamate--cysteine ligase type 2 family. YbdK subfamily.

It carries out the reaction L-cysteine + L-glutamate + ATP = gamma-L-glutamyl-L-cysteine + ADP + phosphate + H(+). In terms of biological role, ATP-dependent carboxylate-amine ligase which exhibits weak glutamate--cysteine ligase activity. The protein is Putative glutamate--cysteine ligase 2 of Burkholderia cenocepacia (strain HI2424).